The chain runs to 1416 residues: Phospholipid-transporting ATPase VD (1416 aa).

The Cytoplasmic segment spans residues Met1 to Arg97. A helical membrane pass occupies residues Ala98–Phe118. Residues Gln119–Lys120 lie on the Exoplasmic loop side of the membrane. Residues Glu121 to Glu141 traverse the membrane as a helical segment. Over Asp142 to Asp321 the chain is Cytoplasmic. The helical transmembrane segment at Val322 to Ile342 threads the bilayer. The Exoplasmic loop portion of the chain corresponds to Trp343–Pro365. The chain crosses the membrane as a helical span at residues Val366–Ile386. Topologically, residues Ser387–Met1110 are cytoplasmic. The active-site 4-aspartylphosphate intermediate is the Asp438. 3 residues coordinate ATP: Asp438, Lys439, and Thr440. Asp438 contacts Mg(2+). Mg(2+) is bound at residue Thr440. A disordered region spans residues Ala498 to Met544. A compositionally biased stretch (polar residues) spans Ala514–Val523. The ATP site is built by Glu729, Phe771, Lys795, Arg838, Thr918, Gly919, and Asp920. The interval Pro971 to Gly990 is disordered. Positions Ser976 to Gln987 are enriched in polar residues. ATP is bound by residues Gly993–Thr1000, Arg1027, and Lys1033. Asp1053 serves as a coordination point for Mg(2+). ATP is bound by residues Asn1056 and Asp1057. Asp1057 contacts Mg(2+). Residues Ile1111–Phe1131 traverse the membrane as a helical segment. Topologically, residues Cys1132–Tyr1142 are exoplasmic loop. A helical membrane pass occupies residues Trp1143–Leu1163. Residues Glu1164–Thr1192 are Cytoplasmic-facing. The helical transmembrane segment at Phe1193–Phe1213 threads the bilayer. At Thr1214 to Asp1221 the chain is on the exoplasmic loop side. The helical transmembrane segment at Ile1222–Val1242 threads the bilayer. Residues Ile1243–His1252 are Cytoplasmic-facing. A helical transmembrane segment spans residues Met1253–Leu1273. Residues Cys1274–Lys1289 lie on the Exoplasmic loop side of the membrane. The chain crosses the membrane as a helical span at residues His1290–Pro1310. Residues Arg1311–Ser1416 are Cytoplasmic-facing. Residues Ser1358 to Ser1416 are disordered. Ala1361–Ser1368 serves as a coordination point for ATP. Over residues Ser1392 to Cys1402 the composition is skewed to basic and acidic residues.

This sequence belongs to the cation transport ATPase (P-type) (TC 3.A.3) family. Type IV subfamily. Component of a P4-ATPase flippase complex which consists of a catalytic alpha subunit ATP10A and an accessory beta subunit TMEM30A. Mg(2+) is required as a cofactor. In terms of processing, autophosphorylated at the conserved aspartate of the P-type ATPase signature sequence. As to expression, expressed at low amounts in liver, brain, testes, and kidney (at protein level). Expressed in placenta.

Its subcellular location is the cell membrane. The protein resides in the endoplasmic reticulum membrane. It carries out the reaction ATP + H2O + phospholipidSide 1 = ADP + phosphate + phospholipidSide 2.. The catalysed reaction is a beta-D-glucosyl-(1&lt;-&gt;1')-N-acylsphing-4-enine(out) + ATP + H2O = a beta-D-glucosyl-(1&lt;-&gt;1')-N-acylsphing-4-enine(in) + ADP + phosphate + H(+). Its function is as follows. Catalytic component of a P4-ATPase flippase complex, which catalyzes the hydrolysis of ATP coupled to the transport of glucosylceramide (GlcCer) from the outer to the inner leaflet of the plasma membrane. This chain is Phospholipid-transporting ATPase VD (Atp10d), found in Mus musculus (Mouse).